The sequence spans 736 residues: Oligopeptide transporter 6 (736 aa).

Helical transmembrane passes span 43–63, 66–86, 116–136, 148–168, 210–230, 258–278, 288–308, 357–377, 412–432, 443–463, 489–511, 527–547, 602–622, 645–665, and 678–698; these read MWVLGIGACIVLSFINQFFWY, MPLSITGISAQIAVVPLGHLM, VLITIFANSGAGSVYATHILS, FLPAFLVMITTQILGFGWAGL, FFLIVLVASFAYYIFPGYLFT, LGIGSIGFDWVTISAYLGSPL, VAIGFVLVMYIVTPVCYWLNI, FFAVTYGLGFATLSATIVHVL, VPLWWFLVILLLNIALIMFIS, WWGVLLACAIAISFTPLIGVI, PVANMCFKVYGYISMTQALTFIS, FMAQVAGTLVAVVVYTGTAWW, WFFLVGAIAPLLVWLATKMFP, ATAVNFTSWLIVAFIFGHFIF, and VLSGGLDAGSAFMTILLFLAL.

The protein belongs to the oligopeptide OPT transporter (TC 2.A.67.1) family. Expressed in flowers and roots, and at a low level in leaves and stems. Detected in the cambial zone of the vascular bundles and in the region of lateral root initiation. Low expression in the vascular network of the petals and high in the stamen filaments and the gynoecium.

The protein resides in the membrane. Functionally, involved in the translocation of tetra- and pentapeptides across the cellular membrane in an energy-dependent manner. Also involved in transport of glutathione derivatives and metal complexes, and may be involved in stress resistance. This chain is Oligopeptide transporter 6 (OPT6), found in Arabidopsis thaliana (Mouse-ear cress).